We begin with the raw amino-acid sequence, 456 residues long: Phosphomethylpyrimidine synthase (456 aa).

Substrate-binding positions include Asn80, Met109, Tyr139, His175, 195–197 (SRG), 236–239 (DSLR), and Glu275. A Zn(2+)-binding site is contributed by His279. Tyr302 contributes to the substrate binding site. A Zn(2+)-binding site is contributed by His343. Residues Cys423, Cys426, and Cys431 each coordinate [4Fe-4S] cluster.

The protein belongs to the ThiC family. Requires [4Fe-4S] cluster as cofactor.

It carries out the reaction 5-amino-1-(5-phospho-beta-D-ribosyl)imidazole + S-adenosyl-L-methionine = 4-amino-2-methyl-5-(phosphooxymethyl)pyrimidine + CO + 5'-deoxyadenosine + formate + L-methionine + 3 H(+). Its pathway is cofactor biosynthesis; thiamine diphosphate biosynthesis. In terms of biological role, catalyzes the synthesis of the hydroxymethylpyrimidine phosphate (HMP-P) moiety of thiamine from aminoimidazole ribotide (AIR) in a radical S-adenosyl-L-methionine (SAM)-dependent reaction. The polypeptide is Phosphomethylpyrimidine synthase (Prochlorococcus marinus (strain MIT 9215)).